The chain runs to 380 residues: Glycogenin-2 (380 aa).

UDP is bound by residues Leu-10, Tyr-16, and Arg-95. Residues Leu-10, Tyr-16, Arg-95, Lys-104, Asp-120, Ala-121, Asp-122, Asn-158, Thr-159, Asp-185, Asp-188, and Gln-189 each coordinate UDP-alpha-D-glucose. UDP-binding residues include Asp-120, Ala-121, and Asp-122. Asp-120 provides a ligand contact to Mn(2+). Asp-122 is a Mn(2+) binding site. O-linked (Glc...) tyrosine glycosylation is found at Tyr-230 and Tyr-232. 3 residues coordinate UDP: His-249, Gly-252, and Lys-255. A Mn(2+)-binding site is contributed by His-249. The UDP-alpha-D-glucose site is built by Gly-252 and Lys-255. Positions 331–357 (SVDRNASQKSTAEKHDIEKPTSKPQSA) are disordered. Over residues 341-351 (TAEKHDIEKPT) the composition is skewed to basic and acidic residues. A glycan (O-linked (Glc...) tyrosine) is linked at Tyr-367.

This sequence belongs to the glycosyltransferase 8 family. Glycogenin subfamily. As to quaternary structure, interacts with glycogen synthase GSY2. The cofactor is Mn(2+).

It is found in the cytoplasm. The protein resides in the vacuole. The catalysed reaction is L-tyrosyl-[glycogenin] + UDP-alpha-D-glucose = alpha-D-glucosyl-L-tyrosyl-[glycogenin] + UDP + H(+). It catalyses the reaction [1,4-alpha-D-glucosyl](n)-L-tyrosyl-[glycogenin] + UDP-alpha-D-glucose = [1,4-alpha-D-glucosyl](n+1)-L-tyrosyl-[glycogenin] + UDP + H(+). In terms of biological role, self-glucosylating initiator of glycogen synthesis. It catalyzes the formation of a short alpha (1,4)-glucosyl chain covalently attached via a glucose 1-O-tyrosyl linkage to internal tyrosine residues and these chains act as primers for the elongation reaction catalyzed by glycogen synthase. Capable of transferring glucosyl residues to unbound acceptors such as free oligoglucans or oligoglucan derivatives. This is Glycogenin-2 (GLG2) from Saccharomyces cerevisiae (strain YJM789) (Baker's yeast).